A 152-amino-acid chain; its full sequence is Large ribosomal subunit protein uL15 (152 aa).

The disordered stretch occupies residues 1–57 (MTSTLNTLKSNSGSRKKKLRKGRGIAAGQGASCGFGMRGQKSRSGRPTRPGFEGGQM). Basic residues predominate over residues 14-23 (SRKKKLRKGR). The segment covering 25-37 (IAAGQGASCGFGM) has biased composition (gly residues).

The protein belongs to the universal ribosomal protein uL15 family. As to quaternary structure, part of the 50S ribosomal subunit.

Functionally, binds to the 23S rRNA. This chain is Large ribosomal subunit protein uL15, found in Prochlorococcus marinus (strain MIT 9301).